Reading from the N-terminus, the 474-residue chain is UDP-N-acetylmuramate--L-alanine ligase (474 aa).

112–118 (GTHGKTT) lines the ATP pocket.

The protein belongs to the MurCDEF family.

The protein localises to the cytoplasm. The catalysed reaction is UDP-N-acetyl-alpha-D-muramate + L-alanine + ATP = UDP-N-acetyl-alpha-D-muramoyl-L-alanine + ADP + phosphate + H(+). It participates in cell wall biogenesis; peptidoglycan biosynthesis. Its function is as follows. Cell wall formation. This chain is UDP-N-acetylmuramate--L-alanine ligase, found in Cupriavidus taiwanensis (strain DSM 17343 / BCRC 17206 / CCUG 44338 / CIP 107171 / LMG 19424 / R1) (Ralstonia taiwanensis (strain LMG 19424)).